Consider the following 393-residue polypeptide: Probable acetyl-CoA acyltransferase (393 aa).

Catalysis depends on C88, which acts as the Acyl-thioester intermediate. Catalysis depends on proton acceptor residues H349 and C378.

It belongs to the thiolase-like superfamily. Thiolase family.

It localises to the cytoplasm. The enzyme catalyses 2 acetyl-CoA = acetoacetyl-CoA + CoA. This chain is Probable acetyl-CoA acyltransferase, found in Staphylococcus aureus (strain MSSA476).